The primary structure comprises 306 residues: MLKFILRRCLEAIPTLFILITISFFMMRLAPGSPFTGERALPPEVLANIEAKYHLNDPIMTQYFSYLKQLAHGDFGPSFKYKDYTVNDLVAASFPVSAKLGAAAFLLAVIIGVSAGVIAALKQNTRWDYTVMGFAMTGVVIPSFVVAPLLVMVFAITLQWLPGGGWNGGALKFMILPMVALSLAYIASIARITRGSMIEVLHSNFIRTARAKGLPMRRIIFRHALKPALLPVLSYMGPAFVGIITGSMVIETIYGLPGIGQLFVNGALNRDYSLVLSLTILVGALTILFNAIVDVLYAVIDPKIRY.

The Cytoplasmic portion of the chain corresponds to 1-12; it reads MLKFILRRCLEA. Residues 13-30 traverse the membrane as a helical segment; the sequence is IPTLFILITISFFMMRLA. The Periplasmic segment spans residues 31 to 101; sequence PGSPFTGERA…ASFPVSAKLG (71 aa). An ABC transmembrane type-1 domain is found at 94–293; that stretch reads FPVSAKLGAA…ALTILFNAIV (200 aa). Residues 102 to 121 form a helical membrane-spanning segment; that stretch reads AAAFLLAVIIGVSAGVIAAL. At 122–133 the chain is on the cytoplasmic side; the sequence is KQNTRWDYTVMG. A helical membrane pass occupies residues 134-156; sequence FAMTGVVIPSFVVAPLLVMVFAI. At 157–165 the chain is on the periplasmic side; it reads TLQWLPGGG. The chain crosses the membrane as a helical span at residues 166–188; the sequence is WNGGALKFMILPMVALSLAYIAS. Topologically, residues 189-227 are cytoplasmic; it reads IARITRGSMIEVLHSNFIRTARAKGLPMRRIIFRHALKP. The chain crosses the membrane as a helical span at residues 228–250; sequence ALLPVLSYMGPAFVGIITGSMVI. The Periplasmic portion of the chain corresponds to 251 to 277; that stretch reads ETIYGLPGIGQLFVNGALNRDYSLVLS. The helical transmembrane segment at 278–300 threads the bilayer; sequence LTILVGALTILFNAIVDVLYAVI. Residues 301–306 are Cytoplasmic-facing; it reads DPKIRY.

It belongs to the binding-protein-dependent transport system permease family. OppBC subfamily. As to quaternary structure, the complex is composed of two ATP-binding proteins (OppD and OppF), two transmembrane proteins (OppB and OppC) and a solute-binding protein (OppA).

The protein resides in the cell inner membrane. In terms of biological role, part of the ABC transporter complex OppABCDF involved in the uptake of oligopeptides, including the cell wall murein tripeptide L-alanyl-gamma-D-glutamyl-meso-diaminopimelate. Responsible for the translocation of the substrate across the membrane. Plays an important nutritional role and is involved in the recycling of cell wall peptides. This is Oligopeptide transport system permease protein OppB from Salmonella typhimurium (strain LT2 / SGSC1412 / ATCC 700720).